Consider the following 244-residue polypeptide: Adiponectin (244 aa).

Residues 1-18 (MLLLGAVLLLLALPGHDQ) form the signal peptide. Threonine 21 and threonine 22 each carry an O-linked (GalNAc...) threonine glycan. Lysine 33 is modified (5-hydroxylysine). Position 36 is an S-(2-succinyl)cysteine (cysteine 36). The disordered stretch occupies residues 40–101 (MAGIPGHPGH…RGFPGIQGRK (62 aa)). The Collagen-like domain occupies 42 to 107 (GIPGHPGHNG…QGRKGEPGEG (66 aa)). 3 positions are modified to 4-hydroxyproline: proline 44, proline 47, and proline 53. Basic and acidic residues predominate over residues 55–70 (RDGRDGTPGEKGEKGD). 5-hydroxylysine occurs at positions 65 and 68. 2 O-linked (Gal...) hydroxylysine; partial glycosylation sites follow: lysine 65 and lysine 68. A 4-hydroxyproline; partial mark is found at proline 71 and proline 76. Lysine 77 is subject to 5-hydroxylysine. Lysine 77 is a glycosylation site (O-linked (Gal...) hydroxylysine; partial). Proline 91 carries the 4-hydroxyproline modification. The residue at position 95 (proline 95) is a 4-hydroxyproline; partial. Lysine 101 is modified (5-hydroxylysine). O-linked (Gal...) hydroxylysine; partial glycosylation is present at lysine 101. Residues 108 to 244 (AYVYRSAFSV…TGFLLYHDTN (137 aa)) form the C1q domain.

Homomultimer. Forms trimers, hexamers and 12- to 18-mers. The trimers (low molecular weight complexes / LMW) are assembled via non-covalent interactions of the collagen-like domains in a triple helix and hydrophobic interactions within the globular C1q domain. Several trimers can associate to form disulfide-linked hexamers (middle molecular weight complexes / MMW) and larger complexes (higher molecular weight / HMW). The HMW-complex assembly is also modulated by the degree of lysine hydroxylation and glycosylation. LMW, MMW and HMW complexes bind to HBEGF, MMW and HMW complexes bind to PDGFB, and HMW complex binds to FGF2. Interacts with CTRP9 via the C1q domain (heterotrimeric complex). In terms of processing, HMW complexes are more extensively glycosylated than smaller oligomers. Hydroxylation and glycosylation of the lysine residues within the collagen-like domain of adiponectin seem to be critically involved in regulating the formation and/or secretion of HMW complexes and consequently contribute to the insulin-sensitizing activity of adiponectin in hepatocytes. Post-translationally, O-glycosylated. Not N-glycosylated. O-linked glycans on hydroxylysines consist of Glc-Gal disaccharides bound to the oxygen atom of post-translationally added hydroxyl groups. Sialylated to varying degrees depending on tissue. Thr-22 appears to be the major site of sialylation. Higher sialylation found in SGBS adipocytes than in HEK fibroblasts. Sialylation is not required neither for heterodimerization nor for secretion. Not sialylated on the glycosylated hydroxylysines. Desialylated forms are rapidly cleared from the circulation. Succination of Cys-36 by the Krebs cycle intermediate fumarate, which leads to S-(2-succinyl)cysteine residues, inhibits polymerization and secretion of adiponectin. Adiponectin is a major target for succination in both adipocytes and adipose tissue of diabetic mammals. It was proposed that succination of proteins is a biomarker of mitochondrial stress and accumulation of Krebs cycle intermediates in adipose tissue in diabetes and that succination of adiponectin may contribute to the decrease in plasma adiponectin in diabetes. As to expression, synthesized exclusively by adipocytes and secreted into plasma.

The protein localises to the secreted. Its activity is regulated as follows. Polymerization and secretion of adiponectin is inhibited by succination of cysteine residues by the Krebs cycle intermediate fumarate, which leads to S-(2-succinyl)cysteine residues. Its function is as follows. Important adipokine involved in the control of fat metabolism and insulin sensitivity, with direct anti-diabetic, anti-atherogenic and anti-inflammatory activities. Stimulates AMPK phosphorylation and activation in the liver and the skeletal muscle, enhancing glucose utilization and fatty-acid combustion. Antagonizes TNF-alpha by negatively regulating its expression in various tissues such as liver and macrophages, and also by counteracting its effects. Inhibits endothelial NF-kappa-B signaling through a cAMP-dependent pathway. May play a role in cell growth, angiogenesis and tissue remodeling by binding and sequestering various growth factors with distinct binding affinities, depending on the type of complex, LMW, MMW or HMW. This Homo sapiens (Human) protein is Adiponectin (ADIPOQ).